Consider the following 156-residue polypeptide: Small ribosomal subunit protein uS7 (156 aa).

Belongs to the universal ribosomal protein uS7 family. As to quaternary structure, part of the 30S ribosomal subunit. Contacts proteins S9 and S11.

One of the primary rRNA binding proteins, it binds directly to 16S rRNA where it nucleates assembly of the head domain of the 30S subunit. Is located at the subunit interface close to the decoding center, probably blocks exit of the E-site tRNA. This chain is Small ribosomal subunit protein uS7, found in Deinococcus deserti (strain DSM 17065 / CIP 109153 / LMG 22923 / VCD115).